Consider the following 259-residue polypeptide: Phosphatidylinositol transfer protein 2 (259 aa).

A coiled-coil region spans residues 231-259 (LTIEDIRKIEEETKAELAKKLEENKAANK).

Belongs to the PtdIns transfer protein family. PI transfer class IIA subfamily.

It localises to the cytoplasm. Its subcellular location is the golgi apparatus. Catalyzes the transfer of PtdIns and phosphatidylcholine between membranes. The sequence is that of Phosphatidylinositol transfer protein 2 (pitB) from Dictyostelium discoideum (Social amoeba).